The following is a 197-amino-acid chain: Rac-like GTP-binding protein ARAC1 (197 aa).

Gly13–Thr20 serves as a coordination point for GTP. The short motif at Tyr35 to Phe43 is the Effector region element. Residues Asp60–Gln64 and Thr118–Asp121 each bind GTP. Residue Cys194 is modified to Cysteine methyl ester. Cys194 carries S-geranylgeranyl cysteine lipidation. The propeptide at Ser195–Leu197 is removed in mature form.

This sequence belongs to the small GTPase superfamily. Rho family. In terms of assembly, interacts with SPK1. In terms of tissue distribution, ubiquitous.

The protein resides in the cytoplasm. The protein localises to the membrane. Inactive GDP-bound Rho GTPases reside in the cytosol, are found in a complex with Rho GDP-dissociation inhibitors (Rho GDIs), and are released from the GDI protein in order to translocate to membranes upon activation. The sequence is that of Rac-like GTP-binding protein ARAC1 (ARAC1) from Arabidopsis thaliana (Mouse-ear cress).